The chain runs to 110 residues: Large ribosomal subunit protein uL22 (110 aa).

This sequence belongs to the universal ribosomal protein uL22 family. Part of the 50S ribosomal subunit.

In terms of biological role, this protein binds specifically to 23S rRNA; its binding is stimulated by other ribosomal proteins, e.g. L4, L17, and L20. It is important during the early stages of 50S assembly. It makes multiple contacts with different domains of the 23S rRNA in the assembled 50S subunit and ribosome. Its function is as follows. The globular domain of the protein is located near the polypeptide exit tunnel on the outside of the subunit, while an extended beta-hairpin is found that lines the wall of the exit tunnel in the center of the 70S ribosome. The sequence is that of Large ribosomal subunit protein uL22 from Geobacter metallireducens (strain ATCC 53774 / DSM 7210 / GS-15).